The sequence spans 238 residues: tRNA1(Val) (adenine(37)-N6)-methyltransferase (238 aa).

It belongs to the methyltransferase superfamily. tRNA (adenine-N(6)-)-methyltransferase family.

The protein localises to the cytoplasm. It carries out the reaction adenosine(37) in tRNA1(Val) + S-adenosyl-L-methionine = N(6)-methyladenosine(37) in tRNA1(Val) + S-adenosyl-L-homocysteine + H(+). Specifically methylates the adenine in position 37 of tRNA(1)(Val) (anticodon cmo5UAC). The sequence is that of tRNA1(Val) (adenine(37)-N6)-methyltransferase from Shewanella baltica (strain OS223).